A 66-amino-acid polypeptide reads, in one-letter code: Large ribosomal subunit protein bL35 (66 aa).

This sequence belongs to the bacterial ribosomal protein bL35 family.

The polypeptide is Large ribosomal subunit protein bL35 (Treponema denticola (strain ATCC 35405 / DSM 14222 / CIP 103919 / JCM 8153 / KCTC 15104)).